The sequence spans 2045 residues: MVVEERKQTIVFGDLTCDSVAGLRTLVTVKDNPLLISFFERVTTGLREEIGLLPFSQRQRFIRFTTFEELLARVQRSTCPHPALEKALACTYQLACFIRQYTSPGHKYPSTQQTCLVGLCTGLLSAAAVGCCQSITDLLPLATHTVLIAFRAGLFVADVRDRLEPQTGAPLAWSVLIPGLDGDTASLTLQKYNEEKGLPATSAPYISTYANTGVTLSGLPSALNDLLDSSCLPKNRALTIPIYAPYHASHLYGQKDIESILRKASATEFASYQCQFSILSSITGQSIQVDTFGALIDYALNAILREPLRLDRIVSSLGEALLSDSPIRGCTIFPIATVIGQSLAAALRKHGAPDITVDPCMNSSIAVRDDRTSTTGHLGHSKLAIIGYSGRFPDANNNEELWQLLHEGRDVASITPSNRWDVKTHVDPTLKKKNTMGTPYGCWLKEPGLFDAKFFALSPREAPQVDPAQRLALMTAYEAMEFAGLVPDSTPSSQSDRIGVFYGTTSNDWGETNSSQNVDTYYIPGSCRAFIPGRQNFFYKFSGPSYSVDTACSSGLAALHLACNSLLKGDIDTAICGGTNVLTNPDITAGLDRGHFLSRTGNCKTFDDDADGYCRGEGVCTMVIKRLEDAKADNDPIIAVILGAYTNHSAEAESITRPHIGAQKAIFEKVLTSAGVDPYSVGYVEMHGTGTQAGDAREMKSVLSVFAPETERPRTDAERLFLGSAKANVGHGESVSGPIALIKSLMMLERNEIPPHCGIKTKINSGFPTDLMDRNVHIAKQPIPWERPEGGVRRIMINNFSAAGGNSSVLIEDAPVFEPKSKEAEPRSTHVVAVSAKSSTALIANIKSLLSYMNATKPELPSLSYTTTARRTHHPFRVMVSGPDLPEIHALLENKLASPTVQNRARAAQRAAFAFTGQGSQYIGMGESLLNFSTFRSDIERFNGIAETLGFPSFLPLLESGNGDISELPPLVVQVGTVCTQIAMARLWRSWGIEPCAVVGHSLGEYAALNIAGVLSEADTIFLAGKRAQLLQEDISANTHAMLAIGTSVEETRSLCDGLEYDIACINTPKETVLSGTNKQIDRILDILSSTSLKKTRLRVPFAFHSSQMEPVLEKFKAAARGVKFYEPKVPVISPLFGEVLTSKEPFGPEYLARHCRETVNFATALESAKADGVISSALWVEIGAHPIVSGLLRNNLDSTLKTVPTLQRNKDTWKVLTSSLSTLYESGVDIRWSEYHRDFIPGLSVLRLPSYNWDLKEYWMQYVNDWSLYKGDAQFLKGTPGLSTTCVHKLVEEKKDGNKITVVGEVDVLRDDVDPFVRGHRVNNLPLVTPSVYAEMALVIGEYLRKQQTKLSGTLVDLQHMDVQRPFATKSKGKGPQLLQCHVVLDCETFQGSVEFWSVTPEGKKLVRHALASITFPDAKAAQEEVQQRAQGIMKEMDDMAARLNTDDRVQKFTGKTGYNLVSSLASYDPEYMGVSSVLLDSGRLEAVATVKFNNPRTDGVYHVNPYLIDNLGQPALFVMNANDQADLSKEVFVNHGWKSLHFYKPLSIQKTYRSHVRMSGPDADGLYGGDMVVFEDKEVVAVYKGIKAQGVPRRLMDYIVHMRDDTKAGAPAGGTLNASQSAAANPAADPSAQADSDNWQAALKIISEESGVPIAELSPEAAFDDLGVDSLLALLCASRFREELGLHYESSIFLDHPTIKELEAFWKQGAPETGAVTVSGRDAVLNSMFTEAEAEVDQDKNSSDEDRSSLGTSSYEVISPNTTETTPEITKTSSPKISATSLLLQGNPALPSTVKTLFLLPDGSGSCSSYAGLPRIHPSIAVVGVNCPFMKTPESYTCGIDEVTQMYITEIRRRQPHGPYALGGWSVGGIFSYHIAQQLAAQGEQVSELILIDCPVPKGLDHLPRRYYEYCDTIGLLGDVNGVKRDPPPWLISHFEACVNSLHTYHATPFRPNNAPRTQIIWACDAIDKHCEPKFDRRPDDPEGLKFLTSTRTDFGPCGWETLLPEEDMTLDRMTGANHFSMMKGEFAKRLSEMIEGFLMIGN.

The N-terminal acylcarrier protein transacylase domain (SAT) stretch occupies residues Ile10–His247. The Ketosynthase family 3 (KS3) domain occupies His380–Asp813. Catalysis depends on for beta-ketoacyl synthase activity residues Cys552, His687, and His731. A malonyl-CoA:ACP transacylase (MAT) domain region spans residues Phe913–Thr1213. The N-terminal hotdog fold stretch occupies residues His1289–Ala1422. Residues His1289–Asp1599 form the PKS/mFAS DH domain. His1321 (proton acceptor; for dehydratase activity) is an active-site residue. A C-terminal hotdog fold region spans residues Ala1442 to Asp1599. The active-site Proton donor; for dehydratase activity is the Asp1511. A disordered region spans residues Ala1612–Ala1636. A compositionally biased stretch (low complexity) spans Asn1619–Ala1636. A Carrier domain is found at Gln1635–Ala1712. The tract at residues Asn1640–Lys1709 is product template (PT) domain. The residue at position 1672 (Ser1672) is an O-(pantetheine 4'-phosphoryl)serine. Residues Glu1735–Ser1776 form a disordered region. Residues Asp1739–Ser1750 show a composition bias toward basic and acidic residues. Residues Ile1760–Ser1776 show a composition bias toward low complexity. Residues Thr1798–Gly2039 are thioesterase.

Pantetheine 4'-phosphate is required as a cofactor.

The protein operates within secondary metabolite biosynthesis. Non-reducing polyketide synthase (NRPKS); part of the gene cluster 27 that mediates the biosynthesis of asparasone A, a sclerotium-specific anthraquinone pigment important for sclerotial survival. Catalyzes the formation of the aromatic polyketide from acetyl coenzyme A and seven malonyl coenzyme A molecules. Through its product template (PT) domain, catalyzes the cyclization of polyketide backbone via C6-C11 aldolcondensation. This is Non-reducing polyketide synthase pks27 from Aspergillus flavus (strain ATCC 200026 / FGSC A1120 / IAM 13836 / NRRL 3357 / JCM 12722 / SRRC 167).